A 472-amino-acid chain; its full sequence is Aspartyl/glutamyl-tRNA(Asn/Gln) amidotransferase subunit B (472 aa).

This sequence belongs to the GatB/GatE family. GatB subfamily. In terms of assembly, heterotrimer of A, B and C subunits.

It carries out the reaction L-glutamyl-tRNA(Gln) + L-glutamine + ATP + H2O = L-glutaminyl-tRNA(Gln) + L-glutamate + ADP + phosphate + H(+). It catalyses the reaction L-aspartyl-tRNA(Asn) + L-glutamine + ATP + H2O = L-asparaginyl-tRNA(Asn) + L-glutamate + ADP + phosphate + 2 H(+). Allows the formation of correctly charged Asn-tRNA(Asn) or Gln-tRNA(Gln) through the transamidation of misacylated Asp-tRNA(Asn) or Glu-tRNA(Gln) in organisms which lack either or both of asparaginyl-tRNA or glutaminyl-tRNA synthetases. The reaction takes place in the presence of glutamine and ATP through an activated phospho-Asp-tRNA(Asn) or phospho-Glu-tRNA(Gln). This Campylobacter jejuni subsp. jejuni serotype O:6 (strain 81116 / NCTC 11828) protein is Aspartyl/glutamyl-tRNA(Asn/Gln) amidotransferase subunit B.